A 265-amino-acid chain; its full sequence is Hydroxyethylthiazole kinase (265 aa).

Substrate is bound at residue Met44. ATP-binding residues include Lys120 and Ser166. Gly193 is a substrate binding site.

This sequence belongs to the Thz kinase family. Mg(2+) is required as a cofactor.

The enzyme catalyses 5-(2-hydroxyethyl)-4-methylthiazole + ATP = 4-methyl-5-(2-phosphooxyethyl)-thiazole + ADP + H(+). It participates in cofactor biosynthesis; thiamine diphosphate biosynthesis; 4-methyl-5-(2-phosphoethyl)-thiazole from 5-(2-hydroxyethyl)-4-methylthiazole: step 1/1. Functionally, catalyzes the phosphorylation of the hydroxyl group of 4-methyl-5-beta-hydroxyethylthiazole (THZ). This chain is Hydroxyethylthiazole kinase, found in Methanosphaerula palustris (strain ATCC BAA-1556 / DSM 19958 / E1-9c).